A 288-amino-acid chain; its full sequence is tRNA pseudouridine synthase B (288 aa).

Residue Asp-38 is the Nucleophile of the active site.

This sequence belongs to the pseudouridine synthase TruB family. Type 1 subfamily.

It carries out the reaction uridine(55) in tRNA = pseudouridine(55) in tRNA. Functionally, responsible for synthesis of pseudouridine from uracil-55 in the psi GC loop of transfer RNAs. In Carboxydothermus hydrogenoformans (strain ATCC BAA-161 / DSM 6008 / Z-2901), this protein is tRNA pseudouridine synthase B.